Consider the following 78-residue polypeptide: Large ribosomal subunit protein bL28 (78 aa).

It belongs to the bacterial ribosomal protein bL28 family.

This chain is Large ribosomal subunit protein bL28, found in Tropheryma whipplei (strain TW08/27) (Whipple's bacillus).